The following is a 125-amino-acid chain: Small ribosomal subunit protein uS12 (125 aa).

Asp-89 is subject to 3-methylthioaspartic acid.

It belongs to the universal ribosomal protein uS12 family. In terms of assembly, part of the 30S ribosomal subunit. Contacts proteins S8 and S17. May interact with IF1 in the 30S initiation complex.

With S4 and S5 plays an important role in translational accuracy. In terms of biological role, interacts with and stabilizes bases of the 16S rRNA that are involved in tRNA selection in the A site and with the mRNA backbone. Located at the interface of the 30S and 50S subunits, it traverses the body of the 30S subunit contacting proteins on the other side and probably holding the rRNA structure together. The combined cluster of proteins S8, S12 and S17 appears to hold together the shoulder and platform of the 30S subunit. This Cupriavidus pinatubonensis (strain JMP 134 / LMG 1197) (Cupriavidus necator (strain JMP 134)) protein is Small ribosomal subunit protein uS12.